A 93-amino-acid chain; its full sequence is UPF0358 protein BPUM_1375 (93 aa).

This sequence belongs to the UPF0358 family.

This chain is UPF0358 protein BPUM_1375, found in Bacillus pumilus (strain SAFR-032).